Consider the following 204-residue polypeptide: Large ribosomal subunit protein bL25 (204 aa).

Belongs to the bacterial ribosomal protein bL25 family. CTC subfamily. As to quaternary structure, part of the 50S ribosomal subunit; part of the 5S rRNA/L5/L18/L25 subcomplex. Contacts the 5S rRNA. Binds to the 5S rRNA independently of L5 and L18.

Functionally, this is one of the proteins that binds to the 5S RNA in the ribosome where it forms part of the central protuberance. The polypeptide is Large ribosomal subunit protein bL25 (Pseudomonas paraeruginosa (strain DSM 24068 / PA7) (Pseudomonas aeruginosa (strain PA7))).